Here is a 385-residue protein sequence, read N- to C-terminus: Mannitol-1-phosphate 5-dehydrogenase (385 aa).

3-14 (ALQFGAGNIGRG) is a binding site for NAD(+).

It belongs to the mannitol dehydrogenase family.

The enzyme catalyses D-mannitol 1-phosphate + NAD(+) = beta-D-fructose 6-phosphate + NADH + H(+). This chain is Mannitol-1-phosphate 5-dehydrogenase, found in Buchnera aphidicola subsp. Acyrthosiphon pisum (strain Tuc7).